A 495-amino-acid polypeptide reads, in one-letter code: Beta-galactoside alpha-2,6-sialyltransferase 2 (495 aa).

Topologically, residues 1-10 (MKPHLKQWRQ) are cytoplasmic. Residues 11 to 31 (GMLCGVFAWGLFFVVIFLYFT) form a helical; Signal-anchor for type II membrane protein membrane-spanning segment. The Lumenal portion of the chain corresponds to 32–495 (DSSPAKPAPS…LQAVRCPPGA (464 aa)). Disordered regions lie at residues 63 to 90 (GASEGLPEGADLRRGSPRGLPSGPLRTW) and 107 to 165 (GRTS…EDGE). Low complexity predominate over residues 134–143 (PEGARPPRAA). Residues 144-153 (PGRRAKRGPR) show a composition bias toward basic residues. Intrachain disulfides connect Cys225/Cys491, Cys268/Cys420, and Cys438/Cys449. N-linked (GlcNAc...) asparagine glycans are attached at residues Asn279 and Asn309.

This sequence belongs to the glycosyltransferase 29 family.

It localises to the golgi apparatus. Its subcellular location is the golgi stack membrane. It carries out the reaction a beta-D-galactoside + CMP-N-acetyl-beta-neuraminate = an N-acetyl-alpha-neuraminyl-(2-&gt;6)-beta-D-galactosyl derivative + CMP + H(+). Transfers sialic acid from the donor of substrate CMP-sialic acid to galactose containing acceptor substrates. Has alpha-2,6-sialyltransferase activity toward oligosaccharides that have the Gal-beta-1,4-GlcNAc sequence at the non-reducing end of their carbohydrate groups, but it has weak or no activities toward glycoproteins and glycolipids. The protein is Beta-galactoside alpha-2,6-sialyltransferase 2 (ST6GAL2) of Bos taurus (Bovine).